The primary structure comprises 363 residues: MSDTSPDYPTLQSIGWPWLGPPEEAAWQAVFAAHPQALPARVVEQHRTGYVVADTPEASVKAESLPEWQRPRFPSHERAAVGDWVLMEGKRIVALLPRRTSIKRGAAGEHYHQQVIAANIDTVFIVCGLDADFNPRRIERYLLLVGGGGAQPVVVLTKADQTEYAEDALAVLEELEAQNIPLRAVNAKDPDSVAALRPWLGDGRTAVLVGSSGAGKSTLTNTLLGTQKMKTNAVRENDSRGRHTTTHRALIPLPSGACLIDTPGMRELKPTGEEDLAEGGFSDVEALAAQCRFNDCAHIAEPGCAVRAAIDAGELDPERVANYMKLRMEVASAAEKLATRVAQNNRGKGSGKRPASVDRPGRH.

One can recognise a CP-type G domain in the interval 112 to 268 (HQQVIAANID…LIDTPGMREL (157 aa)). GTP contacts are provided by residues 157–160 (TKAD) and 210–218 (GSSGAGKST). Cysteine 291, cysteine 296, histidine 298, and cysteine 304 together coordinate Zn(2+). Residues 340–363 (RVAQNNRGKGSGKRPASVDRPGRH) form a disordered region.

It belongs to the TRAFAC class YlqF/YawG GTPase family. RsgA subfamily. Monomer. Associates with 30S ribosomal subunit, binds 16S rRNA. Requires Zn(2+) as cofactor.

The protein localises to the cytoplasm. One of several proteins that assist in the late maturation steps of the functional core of the 30S ribosomal subunit. Helps release RbfA from mature subunits. May play a role in the assembly of ribosomal proteins into the subunit. Circularly permuted GTPase that catalyzes slow GTP hydrolysis, GTPase activity is stimulated by the 30S ribosomal subunit. In Xanthomonas axonopodis pv. citri (strain 306), this protein is Small ribosomal subunit biogenesis GTPase RsgA.